We begin with the raw amino-acid sequence, 459 residues long: Bifunctional protein GlmU (459 aa).

The segment at 1-229 (MTNYAIILAA…FDESLGVNDR (229 aa)) is pyrophosphorylase. Residues 8–11 (LAAG), K22, Q72, and 77–78 (GT) contribute to the UDP-N-acetyl-alpha-D-glucosamine site. A Mg(2+)-binding site is contributed by D102. Residues G139, E154, N169, and N227 each contribute to the UDP-N-acetyl-alpha-D-glucosamine site. Residue N227 participates in Mg(2+) binding. The tract at residues 230 to 250 (VALATAESVMRRRINQQHMVN) is linker. The interval 251-459 (GVSFVNPHAT…KRLPHHPQNK (209 aa)) is N-acetyltransferase. Residues R332 and K350 each contribute to the UDP-N-acetyl-alpha-D-glucosamine site. The Proton acceptor role is filled by H362. 2 residues coordinate UDP-N-acetyl-alpha-D-glucosamine: Y365 and N376. Residues A379, 385–386 (NY), S404, A422, and R439 contribute to the acetyl-CoA site.

The protein in the N-terminal section; belongs to the N-acetylglucosamine-1-phosphate uridyltransferase family. In the C-terminal section; belongs to the transferase hexapeptide repeat family. In terms of assembly, homotrimer. Mg(2+) is required as a cofactor.

It localises to the cytoplasm. It catalyses the reaction alpha-D-glucosamine 1-phosphate + acetyl-CoA = N-acetyl-alpha-D-glucosamine 1-phosphate + CoA + H(+). The enzyme catalyses N-acetyl-alpha-D-glucosamine 1-phosphate + UTP + H(+) = UDP-N-acetyl-alpha-D-glucosamine + diphosphate. It participates in nucleotide-sugar biosynthesis; UDP-N-acetyl-alpha-D-glucosamine biosynthesis; N-acetyl-alpha-D-glucosamine 1-phosphate from alpha-D-glucosamine 6-phosphate (route II): step 2/2. It functions in the pathway nucleotide-sugar biosynthesis; UDP-N-acetyl-alpha-D-glucosamine biosynthesis; UDP-N-acetyl-alpha-D-glucosamine from N-acetyl-alpha-D-glucosamine 1-phosphate: step 1/1. Its pathway is bacterial outer membrane biogenesis; LPS lipid A biosynthesis. Catalyzes the last two sequential reactions in the de novo biosynthetic pathway for UDP-N-acetylglucosamine (UDP-GlcNAc). The C-terminal domain catalyzes the transfer of acetyl group from acetyl coenzyme A to glucosamine-1-phosphate (GlcN-1-P) to produce N-acetylglucosamine-1-phosphate (GlcNAc-1-P), which is converted into UDP-GlcNAc by the transfer of uridine 5-monophosphate (from uridine 5-triphosphate), a reaction catalyzed by the N-terminal domain. This chain is Bifunctional protein GlmU, found in Streptococcus sanguinis (strain SK36).